The sequence spans 421 residues: Gamma-glutamyl phosphate reductase (421 aa).

The protein belongs to the gamma-glutamyl phosphate reductase family.

It is found in the cytoplasm. The enzyme catalyses L-glutamate 5-semialdehyde + phosphate + NADP(+) = L-glutamyl 5-phosphate + NADPH + H(+). It participates in amino-acid biosynthesis; L-proline biosynthesis; L-glutamate 5-semialdehyde from L-glutamate: step 2/2. Catalyzes the NADPH-dependent reduction of L-glutamate 5-phosphate into L-glutamate 5-semialdehyde and phosphate. The product spontaneously undergoes cyclization to form 1-pyrroline-5-carboxylate. This chain is Gamma-glutamyl phosphate reductase, found in Nocardia farcinica (strain IFM 10152).